A 94-amino-acid polypeptide reads, in one-letter code: uncharacterized protein (94 aa).

The next 2 membrane-spanning stretches (helical) occupy residues 9–29 (TLAK…FFST) and 34–54 (LIEL…VFIV).

It is found in the cell membrane. This is an uncharacterized protein from Bacillus subtilis (strain 168).